Here is a 352-residue protein sequence, read N- to C-terminus: Thiamine-monophosphate kinase (352 aa).

Mg(2+)-binding residues include aspartate 58, threonine 73, and aspartate 75. Histidine 82 is a binding site for substrate. Aspartate 103 and aspartate 151 together coordinate Mg(2+). Residues glycine 150–aspartate 151 and arginine 177 each bind ATP. A Mg(2+)-binding site is contributed by aspartate 239. An ATP-binding site is contributed by serine 241. Mg(2+) is bound at residue aspartate 242. Substrate contacts are provided by aspartate 294 and tryptophan 349.

Belongs to the thiamine-monophosphate kinase family.

It carries out the reaction thiamine phosphate + ATP = thiamine diphosphate + ADP. Its pathway is cofactor biosynthesis; thiamine diphosphate biosynthesis; thiamine diphosphate from thiamine phosphate: step 1/1. Functionally, catalyzes the ATP-dependent phosphorylation of thiamine-monophosphate (TMP) to form thiamine-pyrophosphate (TPP), the active form of vitamin B1. The sequence is that of Thiamine-monophosphate kinase from Caulobacter vibrioides (strain ATCC 19089 / CIP 103742 / CB 15) (Caulobacter crescentus).